A 356-amino-acid polypeptide reads, in one-letter code: Glutamine synthetase nodule isozyme (356 aa).

A GS beta-grasp domain is found at 19 to 99 (IIAEYIWIGG…VMCDAYTPAG (81 aa)). The tract at residues 41–66 (PGPVSDPSKLPKWNYDGSSTGQAPGE) is disordered. The GS catalytic domain occupies 106–356 (KRHNAAKIFS…IADTTILWKP (251 aa)).

The protein belongs to the glutamine synthetase family. In terms of assembly, homooctamer.

It is found in the cytoplasm. It carries out the reaction L-glutamate + NH4(+) + ATP = L-glutamine + ADP + phosphate + H(+). The sequence is that of Glutamine synthetase nodule isozyme from Vigna aconitifolia (Moth bean).